A 444-amino-acid chain; its full sequence is MREILHVQAGQCGNQIGGKFWEVVSDEHGIDPKGNYVGTSRVQLERVNVYYNEASGGRYVPRAVLMDLEPGTMDSLRTGPHGQLFRPDNFIFGQNGAGNNWAKGHYTEGAELIDSVLDVVRKEAENCACLQGFQICHSLGGGTGSGMGTLLISKIKEEYPDRMMLTFSVFPSPKVSDTVVEPYNATLSVHQLVENGDECMVLDNEALYDICFRTLKLTNPSFGDLNRLISTTMSGATCCLRFPGQLNSDLRKLAVNLIPFPRLHFFMVGFAPLTSSSSQQYRALTIPELTQQMWDARNMMCAADPRHGRYLTASAMFRGKMSTKEVDEQMINVQNKNSSYFVEWIPNNVKSSVCDIPPTGLTMSSTFMGNSTSIQEMFRRVSEQFTVMFRRKAFLHWYTGEGMDEMEFTEAESNMNDLVSEYQQYQDAVADDNDEDYEDEAMEN.

8 residues coordinate GTP: Gln-11, Glu-69, Ser-138, Gly-142, Thr-143, Gly-144, Asn-204, and Asn-226. Residue Glu-69 participates in Mg(2+) binding.

This sequence belongs to the tubulin family. In terms of assembly, dimer of alpha and beta chains. A typical microtubule is a hollow water-filled tube with an outer diameter of 25 nm and an inner diameter of 15 nM. Alpha-beta heterodimers associate head-to-tail to form protofilaments running lengthwise along the microtubule wall with the beta-tubulin subunit facing the microtubule plus end conferring a structural polarity. Microtubules usually have 13 protofilaments but different protofilament numbers can be found in some organisms and specialized cells. Requires Mg(2+) as cofactor.

The protein resides in the cytoplasm. It is found in the cytoskeleton. Its function is as follows. Tubulin is the major constituent of microtubules, a cylinder consisting of laterally associated linear protofilaments composed of alpha- and beta-tubulin heterodimers. Microtubules grow by the addition of GTP-tubulin dimers to the microtubule end, where a stabilizing cap forms. Below the cap, tubulin dimers are in GDP-bound state, owing to GTPase activity of alpha-tubulin. This Gossypium hirsutum (Upland cotton) protein is Tubulin beta-7 chain.